A 398-amino-acid polypeptide reads, in one-letter code: Phosphoglycerate kinase (398 aa).

Substrate-binding positions include 23–25 (DFN), Arg-38, 61–64 (HMGK), Arg-122, and Arg-155. ATP is bound by residues Lys-206, Gly-297, Glu-328, and 354-357 (GGDS).

The protein belongs to the phosphoglycerate kinase family. As to quaternary structure, monomer.

It is found in the cytoplasm. The enzyme catalyses (2R)-3-phosphoglycerate + ATP = (2R)-3-phospho-glyceroyl phosphate + ADP. The protein operates within carbohydrate degradation; glycolysis; pyruvate from D-glyceraldehyde 3-phosphate: step 2/5. The chain is Phosphoglycerate kinase from Clostridium botulinum (strain Kyoto / Type A2).